The chain runs to 188 residues: Elongation factor P (188 aa).

K34 is modified (N6-(3,6-diaminohexanoyl)-5-hydroxylysine).

Belongs to the elongation factor P family. May be beta-lysylated on the epsilon-amino group of Lys-34 by the combined action of EpmA and EpmB, and then hydroxylated on the C5 position of the same residue by EpmC (if this protein is present). Lysylation is critical for the stimulatory effect of EF-P on peptide-bond formation. The lysylation moiety may extend toward the peptidyltransferase center and stabilize the terminal 3-CCA end of the tRNA. Hydroxylation of the C5 position on Lys-34 may allow additional potential stabilizing hydrogen-bond interactions with the P-tRNA.

The protein localises to the cytoplasm. The protein operates within protein biosynthesis; polypeptide chain elongation. Functionally, involved in peptide bond synthesis. Alleviates ribosome stalling that occurs when 3 or more consecutive Pro residues or the sequence PPG is present in a protein, possibly by augmenting the peptidyl transferase activity of the ribosome. Modification of Lys-34 is required for alleviation. The protein is Elongation factor P of Pectobacterium carotovorum subsp. carotovorum (strain PC1).